The following is a 1182-amino-acid chain: Rho guanine nucleotide exchange factor osg-1 (1182 aa).

Over residues 1 to 12 (MLNPNDADDSDS) the composition is skewed to acidic residues. The segment at 1–96 (MLNPNDADDS…TNSEPNVDMP (96 aa)) is disordered. Polar residues predominate over residues 29–41 (ATVSPSTRNSFYN). The span at 69–78 (ASRERSESRR) shows a compositional bias: basic and acidic residues. The region spanning 357–544 (VRHLAARELL…HCLAVAINQH (188 aa)) is the DH domain. Positions 637–669 (EDVQISKDTLSQLEEVERKLESSREDDRVLKKM) form a coiled coil. Residues 863-884 (INSSGSDTESSSDEGTSTAGQT) are disordered. Positions 865–879 (SSGSDTESSSDEGTS) are enriched in low complexity. Positions 897-922 (VVNSTERVRSRARDRLARLRNSITSI) form a coiled coil.

As to expression, expressed in muscles in the body wall and head, and in the nervous system in neurons including FLP and ASE neurons in the head.

Probable guanine nucleotide exchange factor which regulates the Rho GTPase rho-1. Functions in ASE sensory neurons where it promotes neuronal degeneration under conditions of oxidative stress. The sequence is that of Rho guanine nucleotide exchange factor osg-1 from Caenorhabditis elegans.